The primary structure comprises 276 residues: Diaminopimelate epimerase (276 aa).

Substrate-binding residues include asparagine 13, glutamine 46, and asparagine 66. Cysteine 75 serves as the catalytic Proton donor. Substrate contacts are provided by residues 76-77, asparagine 159, asparagine 192, and 210-211; these read GN and ER. The Proton acceptor role is filled by cysteine 219. 220–221 serves as a coordination point for substrate; that stretch reads GS.

It belongs to the diaminopimelate epimerase family. As to quaternary structure, homodimer.

It is found in the cytoplasm. It catalyses the reaction (2S,6S)-2,6-diaminopimelate = meso-2,6-diaminopimelate. It participates in amino-acid biosynthesis; L-lysine biosynthesis via DAP pathway; DL-2,6-diaminopimelate from LL-2,6-diaminopimelate: step 1/1. In terms of biological role, catalyzes the stereoinversion of LL-2,6-diaminopimelate (L,L-DAP) to meso-diaminopimelate (meso-DAP), a precursor of L-lysine and an essential component of the bacterial peptidoglycan. The polypeptide is Diaminopimelate epimerase (Vibrio vulnificus (strain CMCP6)).